The primary structure comprises 115 residues: Holo-[acyl-carrier-protein] synthase (115 aa).

Residues Asp-8 and Glu-50 each contribute to the Mg(2+) site.

The protein belongs to the P-Pant transferase superfamily. AcpS family. Requires Mg(2+) as cofactor.

The protein resides in the cytoplasm. The enzyme catalyses apo-[ACP] + CoA = holo-[ACP] + adenosine 3',5'-bisphosphate + H(+). Functionally, transfers the 4'-phosphopantetheine moiety from coenzyme A to a Ser of acyl-carrier-protein. The protein is Holo-[acyl-carrier-protein] synthase of Renibacterium salmoninarum (strain ATCC 33209 / DSM 20767 / JCM 11484 / NBRC 15589 / NCIMB 2235).